The sequence spans 406 residues: 3-oxoacyl-[acyl-carrier-protein] synthase 1 (406 aa).

One can recognise a Ketosynthase family 3 (KS3) domain in the interval 1–403 (MRRTVITGFG…GTNATLIFKR (403 aa)). Residues Cys-162, His-297, and His-332 each act as for beta-ketoacyl synthase activity in the active site.

The protein belongs to the thiolase-like superfamily. Beta-ketoacyl-ACP synthases family. Homodimer.

The protein localises to the cytoplasm. It carries out the reaction a fatty acyl-[ACP] + malonyl-[ACP] + H(+) = a 3-oxoacyl-[ACP] + holo-[ACP] + CO2. The enzyme catalyses (3Z)-decenoyl-[ACP] + malonyl-[ACP] + H(+) = 3-oxo-(5Z)-dodecenoyl-[ACP] + holo-[ACP] + CO2. It functions in the pathway lipid metabolism; fatty acid biosynthesis. Involved in the type II fatty acid elongation cycle. Catalyzes the elongation of a wide range of acyl-ACP by the addition of two carbons from malonyl-ACP to an acyl acceptor. Can also use unsaturated fatty acids. Catalyzes a key reaction in unsaturated fatty acid (UFA) synthesis, the elongation of the cis-3-decenoyl-ACP produced by FabA. The protein is 3-oxoacyl-[acyl-carrier-protein] synthase 1 (fabB) of Haemophilus influenzae (strain ATCC 51907 / DSM 11121 / KW20 / Rd).